The chain runs to 155 residues: UPF0461 protein C5orf24 homolog (155 aa).

A compositionally biased stretch (polar residues) spans 1 to 10 (MMHPVASSNP). Residues 1 to 20 (MMHPVASSNPAFCGPGKPSC) form a disordered region. Ser-37 bears the Phosphoserine mark. The interval 40 to 155 (SKYSHTVNHK…QQAFRCSSDA (116 aa)) is disordered. A compositionally biased stretch (polar residues) spans 57 to 70 (DPLNETHLQTTSGR). Residue Lys-75 forms a Glycyl lysine isopeptide (Lys-Gly) (interchain with G-Cter in SUMO2) linkage. The segment covering 80-92 (KKKNLNRSGKRGR) has biased composition (basic residues). Residues 94 to 107 (SGTTKSAGYRTSTG) show a composition bias toward polar residues. Ser-121 carries the post-translational modification Phosphoserine.

The protein belongs to the UPF0461 family.

In Pongo abelii (Sumatran orangutan), this protein is UPF0461 protein C5orf24 homolog.